The following is a 508-amino-acid chain: CUGBP Elav-like family member 2 (508 aa).

Necessary for RNA-binding, TNNT2 exon 5 and NMDA R1 exon 21 inclusion regions lie at residues 1-283 and 357-508; these read MRCP…LQNL and LAGM…SKPY. RRM domains follow at residues 40–123, 132–212, and 423–501; these read IKMF…PADS, RKLF…FADT, and ANLF…LKRS.

It belongs to the CELF/BRUNOL family. In terms of assembly, interacts with A1CF. In terms of tissue distribution, expressed in frontal cortex. Isoform 1 is expressed in brain and lung. Isoform 2 is expressed in heart, brain, placenta, lung, liver, kidney, skeletal muscle and pancreas. Isoform 4 is expressed in heart, lung, skeletal muscle, kidney and pancreas.

The protein localises to the nucleus. It is found in the cytoplasm. Functionally, RNA-binding protein implicated in the regulation of several post-transcriptional events. Involved in pre-mRNA alternative splicing, mRNA translation and stability. Mediates exon inclusion and/or exclusion in pre-mRNA that are subject to tissue-specific and developmentally regulated alternative splicing. Specifically activates exon 5 inclusion of TNNT2 in embryonic, but not adult, skeletal muscle. Activates TNNT2 exon 5 inclusion by antagonizing the repressive effect of PTB. Acts both as an activator and as a repressor of a pair of coregulated exons: promotes inclusion of the smooth muscle (SM) exon but exclusion of the non-muscle (NM) exon in actinin pre-mRNAs. Promotes inclusion of exonS 21 and exclusion of exon 5 of the NMDA receptor R1 pre-mRNA. Involved in the apoB RNA editing activity. Increases COX2 mRNA stability and inhibits COX2 mRNA translation in epithelial cells after radiation injury. Modulates the cellular apoptosis program by regulating COX2-mediated prostaglandin E2 (PGE2) expression. Binds to (CUG)n triplet repeats in the 3'-UTR of transcripts such as DMPK. Binds to the muscle-specific splicing enhancer (MSE) intronic sites flanking the TNNT2 alternative exon 5. Binds preferentially to UG-rich sequences, in particular UG repeat and UGUU motifs. Binds to apoB mRNA, specifically to AU-rich sequences located immediately upstream of the edited cytidine. Binds AU-rich sequences in the 3'-UTR of COX2 mRNA. Binds to an intronic RNA element responsible for the silencing of exon 21 splicing. Binds to (CUG)n repeats. May be a specific regulator of miRNA biogenesis. Binds to primary microRNA pri-MIR140 and, with CELF1, negatively regulates the processing to mature miRNA. This chain is CUGBP Elav-like family member 2 (CELF2), found in Homo sapiens (Human).